The sequence spans 90 residues: Small ribosomal subunit protein bS16 (90 aa).

It belongs to the bacterial ribosomal protein bS16 family.

This chain is Small ribosomal subunit protein bS16, found in Heliobacterium modesticaldum (strain ATCC 51547 / Ice1).